Reading from the N-terminus, the 1734-residue chain is Gag-pol polyprotein (1734 aa).

A lipid anchor (N-myristoyl glycine; by host) is attached at glycine 2. The PTAP/PSAP motif signature appears at 109 to 112 (PTAP). The interval 112-217 (PILPSGPSTQ…STTSRAFPLR (106 aa)) is disordered. The LYPX(n)L motif motif lies at 128-132 (LYPAF). Residues 161–164 (PPPY) carry the PPXY motif motif. Serine 191 carries the post-translational modification Phosphoserine; by host. Positions 344-392 (GRSPTNLAKVKGITQGPNESPSAFLERLKEAYRRYTPYDPEDPGQETNV) are interaction with host PIAS4. The tract at residues 429–434 (IFNKRE) is interaction with host UBE2I. Basic and acidic residues-rich tracts occupy residues 433-474 (RETP…REMS) and 485-498 (RQDR…RPQL). Disordered regions lie at residues 433–498 (RETP…RPQL) and 512–551 (WAKD…EPRI). A CCHC-type zinc finger spans residues 501–518 (DQCAYCKEKGHWAKDCPK). One can recognise a Peptidase A2 domain in the interval 560–630 (VTFLVDTGAQ…CPYPLLGRDL (71 aa)). Catalysis depends on aspartate 565, which acts as the Protease; shared with dimeric partner. The Reverse transcriptase domain maps to 740-931 (LDQGILVPCQ…KQVKYLGYLL (192 aa)). Positions 808, 882, 883, 1182, 1220, 1241, and 1311 each coordinate Mg(2+). The RNase H type-1 domain maps to 1173–1319 (PDADHTWYTD…ADQAAREAAI (147 aa)). The HHCC-type zinc-finger motif lies at 1386–1426 (HRLTHLGYQKMKALLDRGESPYYMLNRDKTLQYVADSCTVC). Positions 1443–1601 (RGHRPGTHWE…TPYEILYGAP (159 aa)) constitute an Integrase catalytic domain. Mg(2+)-binding residues include aspartate 1454 and aspartate 1513.

In terms of assembly, homohexamer; further associates as homomultimer. The virus core is composed of a lattice formed from hexagonal rings, each containing six capsid monomers. Interacts with mouse UBE2I and mouse PIAS4. Interacts (via PPXY motif) with host NEDD4. Interacts (via PSAP motif) with host TSG101. Interacts (via LYPX(n)L motif) with host PDCD6IP. As to quaternary structure, the reverse transcriptase is a monomer (Potential). Interacts (via RNase domains) with host release factor ETF1; this interaction is essential for translational readthrough of amber codon between viral gag and pol genes, as well as for viral replication. In terms of assembly, homodimer. The cofactor is Mg(2+). In terms of processing, ubiquitinated by ITCH. Gag can recruit the ubiquitin ligase Itch in an L domain-independent manner to facilitate virus release via a mechanism that involves Gag ubiquitination. Specific enzymatic cleavages by the viral protease yield mature proteins. The protease is released by autocatalytic cleavage. The polyprotein is cleaved during and after budding, this process is termed maturation. Post-translationally, sumoylated; which is required for virus replication. In terms of processing, phosphorylated on serine residues.

It localises to the virion. Its subcellular location is the host cell membrane. The protein resides in the host late endosome membrane. The protein localises to the host endosome. It is found in the host multivesicular body. It localises to the host cytoplasm. It carries out the reaction DNA(n) + a 2'-deoxyribonucleoside 5'-triphosphate = DNA(n+1) + diphosphate. The enzyme catalyses Endonucleolytic cleavage to 5'-phosphomonoester.. With respect to regulation, most efficiently inhibited by Amprenavir, which is able to block Gag-Pol processing in infected cells. In terms of biological role, plays a role in budding and is processed by the viral protease during virion maturation outside the cell. During budding, it recruits, in a PPXY-dependent or independent manner, Nedd4-like ubiquitin ligases that conjugate ubiquitin molecules to Gag-Pol, or to Gag-Pol binding host factors. Interaction with HECT ubiquitin ligases probably links the viral protein to the host ESCRT pathway and facilitates release. Its function is as follows. Targets Gag and gag-pol polyproteins to the plasma membrane via a multipartite membrane binding signal, that includes its myristoylated N-terminus. Also mediates nuclear localization of the pre-integration complex. Constituent of the pre-integration complex (PIC) which tethers the latter to mitotic chromosomes. This allows the integration of the viral genome into the host DNA. Functionally, forms the spherical core of the virion that encapsulates the genomic RNA-nucleocapsid complex. In terms of biological role, involved in the packaging and encapsidation of two copies of the genome. Binds with high affinity to conserved UCUG elements within the packaging signal, located near the 5'-end of the genome. This binding is dependent on genome dimerization. Acts as a nucleic acid chaperone which is involved in rearrangement of nucleic acid secondary structures during gRNA retrotranscription. Its function is as follows. The aspartyl protease mediates proteolytic cleavages of Gag and Gag-Pol polyproteins during or shortly after the release of the virion from the plasma membrane. Cleavages take place as an ordered, step-wise cascade to yield mature proteins. This process is called maturation. Displays maximal activity during the budding process just prior to particle release from the cell (Potential). Cleaves the translation initiation factor eIF4G leading to the inhibition of host cap-dependent translation. RT is a multifunctional enzyme that converts the viral dimeric RNA genome into dsDNA in the cytoplasm, shortly after virus entry into the cell. This enzyme displays a DNA polymerase activity that can copy either DNA or RNA templates, and a ribonuclease H (RNase H) activity that cleaves the RNA strand of RNA-DNA heteroduplexes in a partially processive 3' to 5' endonucleasic mode. Conversion of viral genomic RNA into dsDNA requires many steps. A tRNA binds to the primer-binding site (PBS) situated at the 5' end of the viral RNA. RT uses the 3' end of the tRNA primer to perform a short round of RNA-dependent minus-strand DNA synthesis. The reading proceeds through the U5 region and ends after the repeated (R) region which is present at both ends of viral RNA. The portion of the RNA-DNA heteroduplex is digested by the RNase H, resulting in a ssDNA product attached to the tRNA primer. This ssDNA/tRNA hybridizes with the identical R region situated at the 3' end of viral RNA. This template exchange, known as minus-strand DNA strong stop transfer, can be either intra- or intermolecular. RT uses the 3' end of this newly synthesized short ssDNA to perform the RNA-dependent minus-strand DNA synthesis of the whole template. RNase H digests the RNA template except for a polypurine tract (PPT) situated at the 5' end of the genome. It is not clear if both polymerase and RNase H activities are simultaneous. RNase H probably can proceed both in a polymerase-dependent (RNA cut into small fragments by the same RT performing DNA synthesis) and a polymerase-independent mode (cleavage of remaining RNA fragments by free RTs). Secondly, RT performs DNA-directed plus-strand DNA synthesis using the PPT that has not been removed by RNase H as primers. PPT and tRNA primers are then removed by RNase H. The 3' and 5' ssDNA PBS regions hybridize to form a circular dsDNA intermediate. Strand displacement synthesis by RT to the PBS and PPT ends produces a blunt ended, linear dsDNA copy of the viral genome that includes long terminal repeats (LTRs) at both ends. Functionally, catalyzes viral DNA integration into the host chromosome, by performing a series of DNA cutting and joining reactions. This enzyme activity takes place after virion entry into a cell and reverse transcription of the RNA genome in dsDNA. The first step in the integration process is 3' processing. This step requires a complex comprising the viral genome, matrix protein and integrase. This complex is called the pre-integration complex (PIC). The integrase protein removes 2 nucleotides from each 3' end of the viral DNA, leaving recessed CA OH's at the 3' ends. In the second step that requires cell division, the PIC enters cell nucleus. In the third step, termed strand transfer, the integrase protein joins the previously processed 3' ends to the 5' ends of strands of target cellular DNA at the site of integration. The last step is viral DNA integration into host chromosome. The polypeptide is Gag-pol polyprotein (gag-pol) (Mus musculus (Mouse)).